Consider the following 307-residue polypeptide: Alpha/beta-gliadin MM1 (307 aa).

Positions 1 to 20 (MKTFLILALLAIVATTARIA) are cleaved as a signal peptide. The span at 29-55 (QPQNPSQQQPQEQVPLVQQQQFPGQQQ) shows a compositional bias: low complexity. Disordered stretches follow at residues 29-134 (QPQN…QQQQ) and 242-267 (QQQY…SVQP). Pro residues-rich tracts occupy residues 56–71 (PFPP…PFPS) and 81–113 (FPQP…PQQP). The sufficient to initiate the primary inflammatory response to gluten in Celiac Sprue patients stretch occupies residues 76-108 (LQLQPFPQPQLPYPQPQLPYPQPQLPYPQPQPF). Low complexity-rich tracts occupy residues 114–134 (YPQS…QQQQ) and 242–260 (QQQY…QNPQ).

Belongs to the gliadin/glutenin family. Post-translationally, substrate of transglutaminase. Expressed in endosperm.

Its function is as follows. Gliadin is the major seed storage protein in wheat. The protein is Alpha/beta-gliadin MM1 of Triticum aestivum (Wheat).